We begin with the raw amino-acid sequence, 382 residues long: Mannitol-1-phosphate 5-dehydrogenase (382 aa).

Residue 3 to 14 (AVHFGAGNIGRG) coordinates NAD(+).

Belongs to the mannitol dehydrogenase family.

It catalyses the reaction D-mannitol 1-phosphate + NAD(+) = beta-D-fructose 6-phosphate + NADH + H(+). The chain is Mannitol-1-phosphate 5-dehydrogenase from Paenarthrobacter aurescens (strain TC1).